A 359-amino-acid chain; its full sequence is 4-hydroxy-3-methylbut-2-en-1-yl diphosphate synthase (flavodoxin) (359 aa).

Residues Cys-264, Cys-267, Cys-299, and Glu-306 each coordinate [4Fe-4S] cluster.

The protein belongs to the IspG family. [4Fe-4S] cluster serves as cofactor.

The catalysed reaction is (2E)-4-hydroxy-3-methylbut-2-enyl diphosphate + oxidized [flavodoxin] + H2O + 2 H(+) = 2-C-methyl-D-erythritol 2,4-cyclic diphosphate + reduced [flavodoxin]. It functions in the pathway isoprenoid biosynthesis; isopentenyl diphosphate biosynthesis via DXP pathway; isopentenyl diphosphate from 1-deoxy-D-xylulose 5-phosphate: step 5/6. Functionally, converts 2C-methyl-D-erythritol 2,4-cyclodiphosphate (ME-2,4cPP) into 1-hydroxy-2-methyl-2-(E)-butenyl 4-diphosphate. The sequence is that of 4-hydroxy-3-methylbut-2-en-1-yl diphosphate synthase (flavodoxin) from Mycoplasmoides gallisepticum (strain R(low / passage 15 / clone 2)) (Mycoplasma gallisepticum).